A 229-amino-acid polypeptide reads, in one-letter code: Uracil-DNA glycosylase (229 aa).

Aspartate 64 acts as the Proton acceptor in catalysis.

It belongs to the uracil-DNA glycosylase (UDG) superfamily. UNG family.

The protein localises to the cytoplasm. The enzyme catalyses Hydrolyzes single-stranded DNA or mismatched double-stranded DNA and polynucleotides, releasing free uracil.. Excises uracil residues from the DNA which can arise as a result of misincorporation of dUMP residues by DNA polymerase or due to deamination of cytosine. This Escherichia coli O81 (strain ED1a) protein is Uracil-DNA glycosylase.